The following is a 136-amino-acid chain: Putative zinc finger protein 818 (136 aa).

The C2H2-type 1; degenerate zinc-finger motif lies at 64-83; sequence NVCGKVLSQNSHLVNHQRIH. Residues 89–111 form a C2H2-type 2 zinc finger; the sequence is YRCHECGKAFTQGSRFINHQIVH.

The protein belongs to the krueppel C2H2-type zinc-finger protein family.

The protein resides in the nucleus. Its function is as follows. May be involved in transcriptional regulation. The polypeptide is Putative zinc finger protein 818 (ZNF818P) (Homo sapiens (Human)).